Here is a 187-residue protein sequence, read N- to C-terminus: MAFLVEKQLFKALFSFFLLVLLFSDTVLSFRKTIDQKKPCKHFSFYFHDILYDGDNVANATSAAIVSPPGLGNFKFGKFVIFDGPITMDKNYLSKPVARAQGFYFYDMKMDFNSWFSYTLVFNSTEHKGTLNIMGADLMMEPTRDLSVVGGTGDFFMARGIATFVTDLFQGAKYFRVKMDIKLYECY.

An N-terminal signal peptide occupies residues 1-29; it reads MAFLVEKQLFKALFSFFLLVLLFSDTVLS. C40 and C186 form a disulfide bridge. Residues N59 and N123 are each glycosylated (N-linked (GlcNAc...) asparagine).

It belongs to the plant dirigent protein family. In terms of assembly, homodimer. In terms of tissue distribution, expressed in roots, cotyledon veins, leaf trichomes, flowers, siliques, and meristems. Present in interfascicular/vascular cambia and developing xylem.

The protein localises to the secreted. It localises to the extracellular space. The protein resides in the apoplast. Functionally, dirigent proteins impart stereoselectivity on the phenoxy radical-coupling reaction, yielding optically active lignans from two molecules of coniferyl alcohol in the biosynthesis of lignans, flavonolignans, and alkaloids and thus plays a central role in plant secondary metabolism. Enantiocomplementary dirigent protein that mediates the laccase-catalyzed enantioselective oxidative phenol coupling of (E)-coniferyl alcohol to (-)-pinoresinol. This Arabidopsis thaliana (Mouse-ear cress) protein is Dirigent protein 6 (DIR6).